A 324-amino-acid chain; its full sequence is MSAGGEHLNEEGNRIQVVAAGATAGLVSRFCVAPLDVVKIRLQLQIHSLSDPLSHRDIKGPIYKGTISTLKSIFRDEGITGLWKGNIPAELLYICYGGIQFSSYRAISSALRTLPHPLPQPVESFISGAVAGGIATTSTYPLDLLRTRFAAQGNDRIYASLRVSVRDIARTEGPHGFFRGATAAIAQIVPYMGLFFAGYEALRSPIASLELPFGTGDAGAGVVASVIAKTGVFPLDLVRKRLQVQGPTRRRYIHTNIPVYEGVYRTIRAILASQGPKGLYRGLTVSLIKAAPASAVTMWTYEHVLGLLKDMNCGDDEDDGGGGI.

Solcar repeat units lie at residues 12 to 110 (GNRI…ISSA), 119 to 205 (PQPV…LRSP), and 212 to 307 (PFGT…VLGL). The next 6 helical transmembrane spans lie at 15-35 (IQVV…VAPL), 79-99 (ITGL…YGGI), 125-145 (FISG…LDLL), 182-202 (TAAI…YEAL), 218-238 (AGAG…LDLV), and 282-299 (GLTV…VTMW).

The protein belongs to the mitochondrial carrier (TC 2.A.29) family.

The protein localises to the mitochondrion inner membrane. Functionally, mitochondrial transporter that mediates uptake of thiamine pyrophosphate (ThPP) into mitochondria. The polypeptide is Mitochondrial thiamine pyrophosphate carrier 1 (TPC1) (Ajellomyces capsulatus (strain NAm1 / WU24) (Darling's disease fungus)).